A 214-amino-acid polypeptide reads, in one-letter code: Cytochrome b (214 aa).

The next 4 membrane-spanning stretches (helical) occupy residues 31-51 (FGSM…FLAI), 75-96 (WIMQ…YIHI), 111-131 (WLSG…GYVL), and 176-196 (FFAL…AHIL). 2 residues coordinate heme b: residue 81 and histidine 95. Residues histidine 180 and histidine 194 each coordinate heme b. A ubiquinone is bound at residue histidine 199.

This sequence belongs to the cytochrome b family. In terms of assembly, the cytochrome bc1 complex contains 3 respiratory subunits (MT-CYB, CYC1 and UQCRFS1), 2 core proteins (UQCRC1 and UQCRC2) and probably 6 low-molecular weight proteins. Requires heme b as cofactor.

It localises to the mitochondrion inner membrane. Its function is as follows. Component of the ubiquinol-cytochrome c reductase complex (complex III or cytochrome b-c1 complex) that is part of the mitochondrial respiratory chain. The b-c1 complex mediates electron transfer from ubiquinol to cytochrome c. Contributes to the generation of a proton gradient across the mitochondrial membrane that is then used for ATP synthesis. In Bothriechis schlegelii (Eyelash palm pitviper), this protein is Cytochrome b (MT-CYB).